Here is a 194-residue protein sequence, read N- to C-terminus: Probable GTP-binding protein EngB (194 aa).

In terms of domain architecture, EngB-type G spans 23 to 194; it reads DKMEFAFVGR…LNFMEEKLNN (172 aa). GTP is bound by residues 31–38, 58–62, 76–79, 142–145, and 173–175; these read GRSNVGKS, GRTQL, DLPG, TKID, and HSS. Mg(2+) contacts are provided by serine 38 and threonine 60.

The protein belongs to the TRAFAC class TrmE-Era-EngA-EngB-Septin-like GTPase superfamily. EngB GTPase family. The cofactor is Mg(2+).

Functionally, necessary for normal cell division and for the maintenance of normal septation. In Fusobacterium nucleatum subsp. nucleatum (strain ATCC 25586 / DSM 15643 / BCRC 10681 / CIP 101130 / JCM 8532 / KCTC 2640 / LMG 13131 / VPI 4355), this protein is Probable GTP-binding protein EngB.